A 413-amino-acid chain; its full sequence is Palmitoyltransferase ZDHHC6 (413 aa).

The Cytoplasmic segment spans residues 1–24; the sequence is MGTFCSVIKFENLQELKRLCHWGP. Residues 25 to 45 traverse the membrane as a helical segment; that stretch reads IIALGVIAICSTMAMIDSVLW. At 46 to 57 the chain is on the lumenal side; that stretch reads YWPLHTTGGSVN. A helical transmembrane segment spans residues 58-78; that stretch reads FIMLINWTVMILYNYFNAMFV. Over 79 to 143 the chain is Cytoplasmic; sequence GPGFVPLGWK…NCCGYQNHAS (65 aa). The DHHC domain maps to 99 to 149; the sequence is QYCKVCQAYKAPRSHHCRKCNRCVMKMDHHCPWINNCCGYQNHASFTLFLL. Cysteine 129 (S-palmitoyl cysteine intermediate) is an active-site residue. Residues 144–164 form a helical membrane-spanning segment; it reads FTLFLLLAPLGCIHAAFIFVM. Over 165 to 205 the chain is Lumenal; the sequence is TMYTQLYHRLSFGWNTVKIDMSAARRDPLPIVPFGLAAFAT. A helical membrane pass occupies residues 206-226; it reads TLFALGLALGTTIAVGMLFFI. Residues 227-413 are Cytoplasmic-facing; that stretch reads QMKIILRNKT…QAPEGEKKNR (187 aa). Residues 313 to 398 form the SH3 domain; the sequence is VRSVRYKVIE…PRKCVEKCPC (86 aa). Residues cysteine 328, cysteine 329, and cysteine 343 are each lipidated (S-palmitoyl cysteine). Positions 410–413 match the Di-lysine motif motif; the sequence is KKNR.

It belongs to the DHHC palmitoyltransferase family. In terms of assembly, homooligomerizes. Interacts with SELENOK. In terms of processing, palmitoylated at 3 different sites by ZDHHC16. The combination of the different palmitoylation events strongly affects the quaternary assembly of ZDHHC6, its localization, stability and function. Palmitoylation at Cys-328 accelerates the turnover of ZDHHC6. Depalmitoylated by LYPLA2.

The protein resides in the endoplasmic reticulum membrane. It carries out the reaction L-cysteinyl-[protein] + hexadecanoyl-CoA = S-hexadecanoyl-L-cysteinyl-[protein] + CoA. The catalysed reaction is L-cysteinyl-[protein] + octadecanoyl-CoA = S-octadecanoyl-L-cysteinyl-[protein] + CoA. Endoplasmic reticulum palmitoyl acyltransferase that mediates palmitoylation of proteins such as AMFR, CALX, ITPR1 and TFRC. Palmitoylates calnexin (CALX), which is required for its association with the ribosome-translocon complex and efficient folding of glycosylated proteins. Mediates palmitoylation of AMFR, promoting AMFR distribution to the peripheral endoplasmic reticulum. Together with SELENOK, palmitoylates ITPR1 in immune cells, leading to regulate ITPR1 stability and function. Stearoyltransferase that mediates stearoylation of TFRC to inhibit TFRC-mediated activation of the JNK pathway and mitochondrial fragmentation. The polypeptide is Palmitoyltransferase ZDHHC6 (Homo sapiens (Human)).